A 122-amino-acid chain; its full sequence is Large ribosomal subunit protein uL14 (122 aa).

The protein belongs to the universal ribosomal protein uL14 family. As to quaternary structure, part of the 50S ribosomal subunit. Forms a cluster with proteins L3 and L19. In the 70S ribosome, L14 and L19 interact and together make contacts with the 16S rRNA in bridges B5 and B8.

In terms of biological role, binds to 23S rRNA. Forms part of two intersubunit bridges in the 70S ribosome. The chain is Large ribosomal subunit protein uL14 from Helicobacter acinonychis (strain Sheeba).